The following is a 238-amino-acid chain: Protein G1-like8 (238 aa).

Disordered stretches follow at residues 1 to 33 (MEGG…RYES) and 147 to 238 (KARG…ATRV). The segment covering 10–27 (GQAQPVAQAPPAMQPMQQ) has biased composition (low complexity). The 128-residue stretch at 30 to 157 (RYESQKRRDW…ARGIPYEKKK (128 aa)) folds into the ALOG domain. The short motif at 155-159 (KKKRK) is the Nuclear localization signal element. The span at 165–176 (QPPPPPPPPPQH) shows a compositional bias: pro residues. Composition is skewed to low complexity over residues 177–213 (QPGA…ATSQ) and 222–238 (TTTT…ATRV).

Belongs to the plant homeotic and developmental regulators ALOG protein family.

It is found in the nucleus. Its function is as follows. Probable transcription regulator that acts as a developmental regulator by promoting cell growth in response to light. This is Protein G1-like8 (G1L8) from Oryza sativa subsp. japonica (Rice).